Here is a 213-residue protein sequence, read N- to C-terminus: Small ribosomal subunit protein uS3 (213 aa).

In terms of domain architecture, KH type-2 spans 38-106 (IREYLENRLS…RVHINIVEIK (69 aa)).

Belongs to the universal ribosomal protein uS3 family. In terms of assembly, part of the 30S ribosomal subunit. Forms a tight complex with proteins S10 and S14.

In terms of biological role, binds the lower part of the 30S subunit head. Binds mRNA in the 70S ribosome, positioning it for translation. This Oceanobacillus iheyensis (strain DSM 14371 / CIP 107618 / JCM 11309 / KCTC 3954 / HTE831) protein is Small ribosomal subunit protein uS3.